A 92-amino-acid polypeptide reads, in one-letter code: Small ribosomal subunit protein uS19c (92 aa).

The protein belongs to the universal ribosomal protein uS19 family.

It localises to the plastid. The protein localises to the chloroplast. Protein S19 forms a complex with S13 that binds strongly to the 16S ribosomal RNA. The polypeptide is Small ribosomal subunit protein uS19c (rps19) (Chlorella vulgaris (Green alga)).